A 64-amino-acid polypeptide reads, in one-letter code: uncharacterized protein (64 aa).

This is an uncharacterized protein from Saccharomyces cerevisiae (strain ATCC 204508 / S288c) (Baker's yeast).